A 142-amino-acid polypeptide reads, in one-letter code: Probable pilin MJ0832.1 (142 aa).

A propeptide spanning residues 1-8 is cleaved from the precursor; sequence MLKFRKRG. The short motif at 9–17 is the QXSXEXXXL element; the sequence is QISLEFSLL.

In terms of processing, the N-terminus is cleaved by the prepilin peptidase EppA, which recognizes the class III signal sequence.

It localises to the secreted. The protein resides in the cell surface. It is found in the fimbrium. The protein is Probable pilin MJ0832.1 of Methanocaldococcus jannaschii (strain ATCC 43067 / DSM 2661 / JAL-1 / JCM 10045 / NBRC 100440) (Methanococcus jannaschii).